Here is a 112-residue protein sequence, read N- to C-terminus: MPVLLGIPLLLRFLGFLLVTLFGYLLTFLKKGFGKIAIAISLFLALIIGLNSILVGYLSDISAQLPSDFVQGVQLILPSNALPCFYVILSVKAAIFIFDVKQKIVSYLDWDK.

Helical transmembrane passes span 3–23, 36–56, and 80–100; these read VLLG…TLFG, IAIA…ILVG, and NALP…IFDV.

This sequence belongs to the inovirus G6P protein family. As to quaternary structure, interacts with G3P; this interaction is required for proper integration of G3P and G6P into the virion.

The protein resides in the virion. It localises to the host membrane. Its function is as follows. Plays essential roles both in the entry of the viral genome into the bacterial host and in budding process. The formation of the G3P-G6P complex termed adsorption complex is essential for correct termination of filamentous phage assembly. In Escherichia coli (Bacteriophage f1), this protein is Head virion protein G6P (VI).